A 431-amino-acid chain; its full sequence is MKKNINLRSLAAQAIEQVVEKGQSLSNVLPPLQQKVSDKDKALLQELCFGVLRTLSQLEWLISKLMARPMTGKQRTVHFLIMVGLYQLLYTRIPPHAALAETVEGAVAIKRPQLKGLINGVLRQFQRQQEALLAEFAEHENRYLHPKWLLKRLQQAWPEQWQEIVEANNQRPPMWLRVNRNHHSRDEWLALLNEAGLEGFTHPDYPDAVRLATPAPVHALPGFAEGWVTVQDASAQGCMRYLQPENGERILDLCAAPGGKTTHILEVAPQAQVMAVDIDEQRLSRVYDNLKRLGVKAEVKQGDGRFPEQWCGNEQFDRILLDAPCSATGVIRRHPDIKWLRRDRDIAELAQLQAEILNAIWGHLKPGGTLVYATCSILPEENSQQIAAFLARTPDAELHATGTPASPGQQNLPGVEEGDGFFYAKLIKRRN.

Residues 254–260 (CAAPGGK), aspartate 277, aspartate 303, and aspartate 322 each bind S-adenosyl-L-methionine. The Nucleophile role is filled by cysteine 375.

Belongs to the class I-like SAM-binding methyltransferase superfamily. RsmB/NOP family.

Its subcellular location is the cytoplasm. The enzyme catalyses cytidine(967) in 16S rRNA + S-adenosyl-L-methionine = 5-methylcytidine(967) in 16S rRNA + S-adenosyl-L-homocysteine + H(+). Its function is as follows. Specifically methylates the cytosine at position 967 (m5C967) of 16S rRNA. This is Ribosomal RNA small subunit methyltransferase B from Klebsiella pneumoniae subsp. pneumoniae (strain ATCC 700721 / MGH 78578).